A 187-amino-acid chain; its full sequence is Cytochrome b-245 chaperone 1 (187 aa).

A helical transmembrane segment spans residues 20-42 (GIRSWSLLVGILSIGLAAAYYSG). Position 168 is a phosphoserine (Ser168).

Belongs to the CYBC1 family. In terms of assembly, interacts with CYBB; CYBC1 may act as a chaperone stabilizing Cytochrome b-245 heterodimer.

The protein localises to the endoplasmic reticulum membrane. Its function is as follows. Functions as a chaperone necessary for a stable expression of the CYBA and CYBB subunits of the cytochrome b-245 heterodimer. Controls the phagocyte respiratory burst and is essential for innate immunity. The sequence is that of Cytochrome b-245 chaperone 1 from Bos taurus (Bovine).